A 430-amino-acid chain; its full sequence is Na(+)/H(+) antiporter NhaA 2 (430 aa).

10 helical membrane-spanning segments follow: residues 11–31 (FVHG…IAFI), 60–80 (LSLE…LVGL), 97–117 (VALA…LYTA), 127–147 (GWGV…ALLG), 181–201 (LNLT…YAGW), 215–235 (VLLW…GVLL), 288–308 (HALH…TNAG), 309–329 (VPVA…GLLL), 356–376 (WGHM…SLFV), and 393–413 (GVLL…LLGI).

Belongs to the NhaA Na(+)/H(+) (TC 2.A.33) antiporter family.

The protein resides in the cell membrane. The catalysed reaction is Na(+)(in) + 2 H(+)(out) = Na(+)(out) + 2 H(+)(in). Functionally, na(+)/H(+) antiporter that extrudes sodium in exchange for external protons. This Deinococcus geothermalis (strain DSM 11300 / CIP 105573 / AG-3a) protein is Na(+)/H(+) antiporter NhaA 2.